The following is a 274-amino-acid chain: Thiamine kinase (274 aa).

Belongs to the thiamine kinase family.

The catalysed reaction is thiamine + ATP = thiamine phosphate + ADP + H(+). It functions in the pathway cofactor biosynthesis; thiamine diphosphate biosynthesis; thiamine phosphate from thiamine: step 1/1. Its function is as follows. Catalyzes the ATP-dependent phosphorylation of thiamine to thiamine phosphate. Is involved in thiamine salvage. The polypeptide is Thiamine kinase (Salmonella choleraesuis (strain SC-B67)).